Here is a 1090-residue protein sequence, read N- to C-terminus: Exocyst complex component SEC5B (1090 aa).

Residues Met-1–Leu-12 show a composition bias toward acidic residues. A disordered region spans residues Met-1–Asp-126. A compositionally biased stretch (polar residues) spans Arg-23 to Pro-46. Positions Ala-52–Lys-62 are enriched in low complexity. The span at Gly-96–Gly-109 shows a compositional bias: gly residues. A compositionally biased stretch (basic and acidic residues) spans Ser-110–Asp-126. Ser-179 is modified (phosphoserine). Over residues Val-486 to Val-502 the composition is skewed to polar residues. Disordered stretches follow at residues Val-486–Arg-511, Glu-984–Val-1013, and Pro-1055–Arg-1090. The span at Arg-999–Gln-1010 shows a compositional bias: basic and acidic residues. A compositionally biased stretch (polar residues) spans Ser-1062–Arg-1071.

The protein belongs to the SEC5 family. In terms of assembly, the exocyst complex is composed of SEC3, SEC5, SEC6, SEC8, SEC10, EXO70A1 and EXO84B.

Component of the exocyst complex involved in the docking of exocytic vesicles with fusion sites on the plasma membrane during regulated or polarized secretion. Involved in polarized cell growth and organ morphogenesis. During cytokinesis, involved in cell plate initiation, cell plate maturation and formation of new primary cell wall. The sequence is that of Exocyst complex component SEC5B (SEC5B) from Arabidopsis thaliana (Mouse-ear cress).